Here is a 428-residue protein sequence, read N- to C-terminus: Transcription factor bHLH91 (428 aa).

Residues 210–259 enclose the bHLH domain; that stretch reads KRKNKPFTTERERRCHLNERYEALKLLIPSPSKGDRASILQDGIDYINEL. Residues 278 to 320 are disordered; it reads RHKNNEVDDNNNNKNLDDHGNEDDDDDDENMEKKPESDVIDQC. Positions 297-307 are enriched in acidic residues; sequence GNEDDDDDDEN.

As to quaternary structure, homodimer. Flowers.

It localises to the nucleus. This Arabidopsis thaliana (Mouse-ear cress) protein is Transcription factor bHLH91 (BHLH91).